A 448-amino-acid polypeptide reads, in one-letter code: tRNA modification GTPase MnmE (448 aa).

(6S)-5-formyl-5,6,7,8-tetrahydrofolate contacts are provided by Arg-24, Glu-81, and Lys-120. The 158-residue stretch at 216 to 373 folds into the TrmE-type G domain; it reads GLNVVLVGAP…LKRTLLCEAG (158 aa). Asn-226 contacts K(+). Residues 226–231, 245–251, and 270–273 contribute to the GTP site; these read NVGKSS, TDIAGTT, and DTAG. Ser-230 lines the Mg(2+) pocket. Thr-245, Ile-247, and Thr-250 together coordinate K(+). Residue Thr-251 participates in Mg(2+) binding. Lys-448 contacts (6S)-5-formyl-5,6,7,8-tetrahydrofolate.

Belongs to the TRAFAC class TrmE-Era-EngA-EngB-Septin-like GTPase superfamily. TrmE GTPase family. In terms of assembly, homodimer. Heterotetramer of two MnmE and two MnmG subunits. K(+) is required as a cofactor.

It localises to the cytoplasm. Its function is as follows. Exhibits a very high intrinsic GTPase hydrolysis rate. Involved in the addition of a carboxymethylaminomethyl (cmnm) group at the wobble position (U34) of certain tRNAs, forming tRNA-cmnm(5)s(2)U34. This Neisseria gonorrhoeae (strain ATCC 700825 / FA 1090) protein is tRNA modification GTPase MnmE.